A 308-amino-acid polypeptide reads, in one-letter code: Peptidyl-prolyl cis-trans isomerase CYP8 (308 aa).

Positions 56–215 (FTDPESSEEA…QPITIGYISS (160 aa)) constitute a PPIase cyclophilin-type domain.

The catalysed reaction is [protein]-peptidylproline (omega=180) = [protein]-peptidylproline (omega=0). In terms of biological role, PPIases accelerate the folding of proteins. It catalyzes the cis-trans isomerization of proline imidic peptide bonds in oligopeptides. The protein is Peptidyl-prolyl cis-trans isomerase CYP8 (CPR8) of Saccharomyces cerevisiae (strain ATCC 204508 / S288c) (Baker's yeast).